Reading from the N-terminus, the 472-residue chain is Transcriptional activator protein rec16 (472 aa).

The C2H2-type zinc-finger motif lies at F420–H444.

The protein resides in the nucleus. Its function is as follows. Transcriptional activator that controls the onset of premeiotic DNA synthesis by regulating res2 and some other factor(s) in a mei2 independent cascade. The sequence is that of Transcriptional activator protein rec16 (rec16) from Schizosaccharomyces pombe (strain 972 / ATCC 24843) (Fission yeast).